A 473-amino-acid chain; its full sequence is Thermostable beta-glucosidase B (473 aa).

Glu-196 functions as the Proton donor in the catalytic mechanism. Glu-378 serves as the catalytic Nucleophile.

The protein belongs to the glycosyl hydrolase 1 family.

The protein resides in the cytoplasm. The catalysed reaction is Hydrolysis of terminal, non-reducing beta-D-glucosyl residues with release of beta-D-glucose.. This chain is Thermostable beta-glucosidase B (bglB), found in Thermobispora bispora (Microbispora bispora).